The sequence spans 424 residues: Virion nicking-joining enzyme (424 aa).

PLD phosphodiesterase domains lie at 110–137 and 320–346; these read LGGVLHTKFWISDNTHIYLGSANMDWRS and YSRVNHAKYMVTDKTAYIGTSNWTGNY.

Belongs to the orthopoxvirus OPG042 family.

It is found in the virion. Its function is as follows. DNA nicking enzyme that cleaves extruded cruciform DNA at its tip. Probably nicks viral hairpins. In Vaccinia virus (strain Western Reserve) (VACV), this protein is Virion nicking-joining enzyme (OPG042).